Consider the following 182-residue polypeptide: Adenine phosphoribosyltransferase (182 aa).

This sequence belongs to the purine/pyrimidine phosphoribosyltransferase family. In terms of assembly, homodimer.

It localises to the cytoplasm. It catalyses the reaction AMP + diphosphate = 5-phospho-alpha-D-ribose 1-diphosphate + adenine. It participates in purine metabolism; AMP biosynthesis via salvage pathway; AMP from adenine: step 1/1. Catalyzes a salvage reaction resulting in the formation of AMP, that is energically less costly than de novo synthesis. The sequence is that of Adenine phosphoribosyltransferase from Wolinella succinogenes (strain ATCC 29543 / DSM 1740 / CCUG 13145 / JCM 31913 / LMG 7466 / NCTC 11488 / FDC 602W) (Vibrio succinogenes).